We begin with the raw amino-acid sequence, 435 residues long: 5-methylthioadenosine/S-adenosylhomocysteine deaminase (435 aa).

Residues histidine 65 and histidine 67 each coordinate Zn(2+). Residues glutamate 94, arginine 150, and histidine 189 each coordinate substrate. Histidine 216 lines the Zn(2+) pocket. 2 residues coordinate substrate: glutamate 219 and aspartate 304. Position 304 (aspartate 304) interacts with Zn(2+).

It belongs to the metallo-dependent hydrolases superfamily. MTA/SAH deaminase family. Requires Zn(2+) as cofactor.

It catalyses the reaction S-adenosyl-L-homocysteine + H2O + H(+) = S-inosyl-L-homocysteine + NH4(+). The enzyme catalyses S-methyl-5'-thioadenosine + H2O + H(+) = S-methyl-5'-thioinosine + NH4(+). Its function is as follows. Catalyzes the deamination of 5-methylthioadenosine and S-adenosyl-L-homocysteine into 5-methylthioinosine and S-inosyl-L-homocysteine, respectively. Is also able to deaminate adenosine. In Bacillus cereus (strain ZK / E33L), this protein is 5-methylthioadenosine/S-adenosylhomocysteine deaminase.